The following is a 154-amino-acid chain: MGLSDGEWQLVLNIWGKVEADIPSHGQEVLISLFKGHPETLEKFDKFKHLKSEDEMKASEELKKHGTTVLTALGGILKKKGQHEAELKPLAQSHATKHKIPVKYLELISDAIVHVLQKKHPGDFGADAQGAMKKALELFRNDMAAKYKELGFQG.

The region spanning 2–148 (GLSDGEWQLV…FRNDMAAKYK (147 aa)) is the Globin domain. A Phosphoserine modification is found at Ser4. His65 is a nitrite binding site. His65 provides a ligand contact to O2. At Thr68 the chain carries Phosphothreonine. His94 is a binding site for heme b.

Belongs to the globin family. As to quaternary structure, monomeric.

Its subcellular location is the cytoplasm. It localises to the sarcoplasm. The enzyme catalyses Fe(III)-heme b-[protein] + nitric oxide + H2O = Fe(II)-heme b-[protein] + nitrite + 2 H(+). It catalyses the reaction H2O2 + AH2 = A + 2 H2O. Functionally, monomeric heme protein which primary function is to store oxygen and facilitate its diffusion within muscle tissues. Reversibly binds oxygen through a pentacoordinated heme iron and enables its timely and efficient release as needed during periods of heightened demand. Depending on the oxidative conditions of tissues and cells, and in addition to its ability to bind oxygen, it also has a nitrite reductase activity whereby it regulates the production of bioactive nitric oxide. Under stress conditions, like hypoxia and anoxia, it also protects cells against reactive oxygen species thanks to its pseudoperoxidase activity. This chain is Myoglobin (MB), found in Saimiri sciureus (Common squirrel monkey).